The chain runs to 309 residues: Diacylglycerol kinase (309 aa).

The DAGKc domain maps to 9–140; sequence HEIGKVTALT…IDLGRIQDDN (132 aa). ATP is bound by residues 19–23, 76–82, and threonine 101; these read NPLSG and GDGVVSN. Mg(2+) contacts are provided by aspartate 226, aspartate 229, and leucine 231. Catalysis depends on aspartate 285, which acts as the Proton acceptor.

The protein belongs to the diacylglycerol/lipid kinase family. It depends on Mg(2+) as a cofactor.

Its subcellular location is the secreted. It localises to the cell wall. The catalysed reaction is a 1,2-diacyl-sn-glycerol + ATP = a 1,2-diacyl-sn-glycero-3-phosphate + ADP + H(+). It carries out the reaction N-hexadecanoylsphing-4-enine + ATP = N-(hexadecanoyl)-sphing-4-enine-1-phosphate + ADP + H(+). Functionally, catalyzes the phosphorylation of diacylglycerol (DAG) into phosphatidic acid. Is involved in the biosynthesis of phosphatidylinositol mannosides (PIMs), probably via a role in the biosynthesis of phosphatidylinositol (PI), a PIM precursor, which is derived from phosphatidic acid. Is also able to phosphorylate other various amphipathic lipids of host and bacterial origin in vitro, such as ceramide. The protein is Diacylglycerol kinase (dagK) of Mycobacterium tuberculosis (strain CDC 1551 / Oshkosh).